A 654-amino-acid polypeptide reads, in one-letter code: Bifunctional polymyxin resistance protein ArnA (654 aa).

Positions methionine 1 to leucine 303 are formyltransferase ArnAFT. Histidine 105 serves as the catalytic Proton donor; for formyltransferase activity. Position 137 to 141 (threonine 137 to aspartate 141) interacts with (6R)-10-formyltetrahydrofolate. The dehydrogenase ArnADH stretch occupies residues asparagine 313–serine 654. Residues aspartate 346 and aspartate 367 to isoleucine 368 contribute to the NAD(+) site. UDP-alpha-D-glucuronate contacts are provided by residues alanine 392, tyrosine 397, and threonine 431–serine 432. Glutamate 433 (proton acceptor; for decarboxylase activity) is an active-site residue. UDP-alpha-D-glucuronate contacts are provided by residues arginine 459, asparagine 491, glutamine 532 to arginine 534, and tyrosine 612. Arginine 618 (proton donor; for decarboxylase activity) is an active-site residue.

This sequence in the N-terminal section; belongs to the Fmt family. UDP-L-Ara4N formyltransferase subfamily. The protein in the C-terminal section; belongs to the NAD(P)-dependent epimerase/dehydratase family. UDP-glucuronic acid decarboxylase subfamily. Homohexamer, formed by a dimer of trimers.

The enzyme catalyses UDP-alpha-D-glucuronate + NAD(+) = UDP-beta-L-threo-pentopyranos-4-ulose + CO2 + NADH. It catalyses the reaction UDP-4-amino-4-deoxy-beta-L-arabinose + (6R)-10-formyltetrahydrofolate = UDP-4-deoxy-4-formamido-beta-L-arabinose + (6S)-5,6,7,8-tetrahydrofolate + H(+). Its pathway is nucleotide-sugar biosynthesis; UDP-4-deoxy-4-formamido-beta-L-arabinose biosynthesis; UDP-4-deoxy-4-formamido-beta-L-arabinose from UDP-alpha-D-glucuronate: step 1/3. The protein operates within nucleotide-sugar biosynthesis; UDP-4-deoxy-4-formamido-beta-L-arabinose biosynthesis; UDP-4-deoxy-4-formamido-beta-L-arabinose from UDP-alpha-D-glucuronate: step 3/3. It functions in the pathway bacterial outer membrane biogenesis; lipopolysaccharide biosynthesis. Functionally, bifunctional enzyme that catalyzes the oxidative decarboxylation of UDP-glucuronic acid (UDP-GlcUA) to UDP-4-keto-arabinose (UDP-Ara4O) and the addition of a formyl group to UDP-4-amino-4-deoxy-L-arabinose (UDP-L-Ara4N) to form UDP-L-4-formamido-arabinose (UDP-L-Ara4FN). The modified arabinose is attached to lipid A and is required for resistance to polymyxin and cationic antimicrobial peptides. This is Bifunctional polymyxin resistance protein ArnA from Wigglesworthia glossinidia brevipalpis.